The following is an 860-amino-acid chain: Photoactivated adenylate cyclase subunit beta (860 aa).

The 94-residue stretch at 56–149 folds into the BLUF 1 domain; it reads LRRLMYLSKS…GRMYGDWHMK (94 aa). One can recognise a Guanylate cyclase 1 domain in the interval 205–333; sequence VVTFIYLVEF…DCINTTSRIA (129 aa). The tract at residues 420-443 is disordered; the sequence is RPPIFDDTPKGKPRPRTPGYGGRQ. The BLUF 2 domain occupies 471–563; that stretch reads LTTLTYISQA…RAYPAEWTLT (93 aa). The region spanning 619-748 is the Guanylate cyclase 2 domain; sequence VMLATDICSF…AVSARVMEVE (130 aa). The disordered stretch occupies residues 819–860; that stretch reads KPLALEPEEAKQDYRVSPGRMRHGDSGRRSNSAQGKRSTQVR. A compositionally biased stretch (polar residues) spans 847 to 860; sequence RSNSAQGKRSTQVR.

It belongs to the adenylyl cyclase class-4/guanylyl cyclase family. Heterotetramer of two alpha and two beta subunits. Requires FAD as cofactor.

The protein localises to the cell projection. Its subcellular location is the cilium. It localises to the flagellum. It catalyses the reaction ATP = 3',5'-cyclic AMP + diphosphate. Acts as a photoreceptor for the step-up photophobic response. This Euglena longa (Euglenophycean alga) protein is Photoactivated adenylate cyclase subunit beta.